Consider the following 242-residue polypeptide: MMMDLFETGSYFFYLDGENGALQQLEMAEGSPLYPGSDGTLSPCQDQLPPEAGSDSSGEEHVLAPPGLQPPHCPGQCLIWACKTCKRKSAPTDRRKAATLRERRRLKKINEAFEALKRRTVANPNQRLPKVEILRSAISYIERLQDLLHRLDQQDKMQEVAADPFSFSPKQGNVPGSDFLSTCGSDWHSASDHSRALGGSPKAGGSMVESSASSSLRCLSSIVDSISSDEPKLPGAEEAVEK.

A disordered region spans residues 30 to 63; the sequence is GSPLYPGSDGTLSPCQDQLPPEAGSDSSGEEHVL. One can recognise a bHLH domain in the interval 93–144; that stretch reads DRRKAATLRERRRLKKINEAFEALKRRTVANPNQRLPKVEILRSAISYIERL. Residues 190–210 form a disordered region; that stretch reads ASDHSRALGGSPKAGGSMVES.

Efficient DNA binding requires dimerization with another bHLH protein. Skeletal muscle.

The protein resides in the nucleus. Involved in muscle differentiation (myogenic factor). Induces fibroblasts to differentiate into myoblasts. Probable sequence specific DNA-binding protein. The polypeptide is Myogenic factor 6 (MYF6) (Gallus gallus (Chicken)).